We begin with the raw amino-acid sequence, 478 residues long: E3 ubiquitin-protein ligase makorin-1 (478 aa).

3 C3H1-type zinc fingers span residues 51–78 (WTKQ…HDLS), 80–107 (SQSA…HTKP), and 204–231 (EMKK…HGDA). Positions 232–259 (CDMCGLQVLHPVDAAQRSQHIKSCIEAH) are makorin-type Cys-His. Residues 277–331 (CGICMEVVYEKANPSERRFGILSNCNHTYCLKCIRKWRSAKQFESKIIKSCPECR) form an RING-type zinc finger. A C3H1-type 4 zinc finger spans residues 360–389 (AMSNKPCRYFDEGRGSCPFGGNCFYKHAYP).

Interacts with p53/TP53 and CDKN1A. Interacts with TERT, modulating telomere length homeostasis. Post-translationally, auto-ubiquitinated; which leads to proteasomal degradation.

It carries out the reaction S-ubiquitinyl-[E2 ubiquitin-conjugating enzyme]-L-cysteine + [acceptor protein]-L-lysine = [E2 ubiquitin-conjugating enzyme]-L-cysteine + N(6)-ubiquitinyl-[acceptor protein]-L-lysine.. It participates in protein modification; protein ubiquitination. Functionally, E3 ubiquitin ligase catalyzing the covalent attachment of ubiquitin moieties onto substrate proteins. These substrates include FILIP1, p53/TP53, CDKN1A and TERT. Keeps cells alive by suppressing p53/TP53 under normal conditions, but stimulates apoptosis by repressing CDKN1A under stress conditions. Acts as a negative regulator of telomerase. Has negative and positive effects on RNA polymerase II-dependent transcription. This chain is E3 ubiquitin-protein ligase makorin-1 (MKRN1), found in Notamacropus eugenii (Tammar wallaby).